We begin with the raw amino-acid sequence, 371 residues long: UDP-N-acetylglucosamine--N-acetylmuramyl-(pentapeptide) pyrophosphoryl-undecaprenol N-acetylglucosamine transferase (371 aa).

UDP-N-acetyl-alpha-D-glucosamine is bound by residues 15-17, Asn-126, Arg-172, Ser-199, Ile-256, 275-280, and Gln-301; these read TGG and ALTVSE.

The protein belongs to the glycosyltransferase 28 family. MurG subfamily.

It localises to the cell inner membrane. The enzyme catalyses di-trans,octa-cis-undecaprenyl diphospho-N-acetyl-alpha-D-muramoyl-L-alanyl-D-glutamyl-meso-2,6-diaminopimeloyl-D-alanyl-D-alanine + UDP-N-acetyl-alpha-D-glucosamine = di-trans,octa-cis-undecaprenyl diphospho-[N-acetyl-alpha-D-glucosaminyl-(1-&gt;4)]-N-acetyl-alpha-D-muramoyl-L-alanyl-D-glutamyl-meso-2,6-diaminopimeloyl-D-alanyl-D-alanine + UDP + H(+). It participates in cell wall biogenesis; peptidoglycan biosynthesis. Functionally, cell wall formation. Catalyzes the transfer of a GlcNAc subunit on undecaprenyl-pyrophosphoryl-MurNAc-pentapeptide (lipid intermediate I) to form undecaprenyl-pyrophosphoryl-MurNAc-(pentapeptide)GlcNAc (lipid intermediate II). This Francisella tularensis subsp. holarctica (strain FTNF002-00 / FTA) protein is UDP-N-acetylglucosamine--N-acetylmuramyl-(pentapeptide) pyrophosphoryl-undecaprenol N-acetylglucosamine transferase.